The sequence spans 34 residues: Photosystem II reaction center protein M (34 aa).

A helical transmembrane segment spans residues 7–27; it reads GFIATILFVLVPTVFLLILYI.

Belongs to the PsbM family. PSII is composed of 1 copy each of membrane proteins PsbA, PsbB, PsbC, PsbD, PsbE, PsbF, PsbH, PsbI, PsbJ, PsbK, PsbL, PsbM, PsbT, PsbX, PsbY, PsbZ, Psb30/Ycf12, peripheral proteins PsbO, CyanoQ (PsbQ), PsbU, PsbV and a large number of cofactors. It forms dimeric complexes.

The protein localises to the cellular thylakoid membrane. In terms of biological role, one of the components of the core complex of photosystem II (PSII). PSII is a light-driven water:plastoquinone oxidoreductase that uses light energy to abstract electrons from H(2)O, generating O(2) and a proton gradient subsequently used for ATP formation. It consists of a core antenna complex that captures photons, and an electron transfer chain that converts photonic excitation into a charge separation. This subunit is found at the monomer-monomer interface. This Picosynechococcus sp. (strain ATCC 27264 / PCC 7002 / PR-6) (Agmenellum quadruplicatum) protein is Photosystem II reaction center protein M.